Consider the following 348-residue polypeptide: Phosphate acyltransferase (348 aa).

It belongs to the PlsX family. In terms of assembly, homodimer. Probably interacts with PlsY.

It localises to the cytoplasm. It carries out the reaction a fatty acyl-[ACP] + phosphate = an acyl phosphate + holo-[ACP]. It functions in the pathway lipid metabolism; phospholipid metabolism. Its function is as follows. Catalyzes the reversible formation of acyl-phosphate (acyl-PO(4)) from acyl-[acyl-carrier-protein] (acyl-ACP). This enzyme utilizes acyl-ACP as fatty acyl donor, but not acyl-CoA. This Leuconostoc citreum (strain KM20) protein is Phosphate acyltransferase.